The chain runs to 446 residues: BAG family molecular chaperone regulator 7 (446 aa).

The disordered stretch occupies residues 230-252; sequence TGGEKKKKHEEKEKKEKIETKSK. Basic and acidic residues predominate over residues 239–250; sequence EEKEKKEKIETK. The IQ domain maps to 303-332; sequence PEYAAVMIQRAFKAYLIRRSKSLRALRDLA. One can recognise a BAG domain in the interval 330–407; it reads DLAIAKTKLK…AMLDVVDPQP (78 aa). Threonine 443 carries the post-translational modification Phosphothreonine.

Binds to the ATPase domain of HSP70/HSC70 chaperones. Interacts with HSP70-11/BIP2.

Its subcellular location is the endoplasmic reticulum. Functionally, co-chaperone that regulates diverse cellular pathways, such as programmed cell death and stress responses. Necessary for the proper maintenance of the unfolded protein response (UPR) during heat and cold tolerance. This chain is BAG family molecular chaperone regulator 7 (BAG7), found in Arabidopsis thaliana (Mouse-ear cress).